The chain runs to 180 residues: Large ribosomal subunit protein uL5 (180 aa).

The protein belongs to the universal ribosomal protein uL5 family. In terms of assembly, part of the 50S ribosomal subunit; part of the 5S rRNA/L5/L18/L25 subcomplex. Contacts the 5S rRNA and the P site tRNA. Forms a bridge to the 30S subunit in the 70S ribosome.

Its function is as follows. This is one of the proteins that bind and probably mediate the attachment of the 5S RNA into the large ribosomal subunit, where it forms part of the central protuberance. In the 70S ribosome it contacts protein S13 of the 30S subunit (bridge B1b), connecting the 2 subunits; this bridge is implicated in subunit movement. Contacts the P site tRNA; the 5S rRNA and some of its associated proteins might help stabilize positioning of ribosome-bound tRNAs. The protein is Large ribosomal subunit protein uL5 of Ligilactobacillus salivarius (strain UCC118) (Lactobacillus salivarius).